Consider the following 482-residue polypeptide: UDP-N-acetylmuramoyl-L-alanyl-D-glutamate--2,6-diaminopimelate ligase (482 aa).

Ser24 is a UDP-N-acetyl-alpha-D-muramoyl-L-alanyl-D-glutamate binding site. Position 105-111 (105-111 (GTNGKTT)) interacts with ATP. Residues 147 to 148 (TT), Ser174, Gln180, and Arg182 each bind UDP-N-acetyl-alpha-D-muramoyl-L-alanyl-D-glutamate. Lys214 carries the post-translational modification N6-carboxylysine. Residues Arg378, 402–405 (DNPR), Gly453, and Glu457 each bind meso-2,6-diaminopimelate. Residues 402 to 405 (DNPR) carry the Meso-diaminopimelate recognition motif motif.

Belongs to the MurCDEF family. MurE subfamily. Mg(2+) serves as cofactor. Post-translationally, carboxylation is probably crucial for Mg(2+) binding and, consequently, for the gamma-phosphate positioning of ATP.

It is found in the cytoplasm. It catalyses the reaction UDP-N-acetyl-alpha-D-muramoyl-L-alanyl-D-glutamate + meso-2,6-diaminopimelate + ATP = UDP-N-acetyl-alpha-D-muramoyl-L-alanyl-gamma-D-glutamyl-meso-2,6-diaminopimelate + ADP + phosphate + H(+). It functions in the pathway cell wall biogenesis; peptidoglycan biosynthesis. Catalyzes the addition of meso-diaminopimelic acid to the nucleotide precursor UDP-N-acetylmuramoyl-L-alanyl-D-glutamate (UMAG) in the biosynthesis of bacterial cell-wall peptidoglycan. This Lawsonia intracellularis (strain PHE/MN1-00) protein is UDP-N-acetylmuramoyl-L-alanyl-D-glutamate--2,6-diaminopimelate ligase.